A 317-amino-acid polypeptide reads, in one-letter code: Adenine deaminase (317 aa).

Zn(2+)-binding residues include His14, His16, and His194. Residue Glu197 is the Proton donor of the active site. Residue Asp275 participates in Zn(2+) binding. Asp276 serves as a coordination point for substrate.

The protein belongs to the metallo-dependent hydrolases superfamily. Adenosine and AMP deaminases family. Adenine deaminase type 2 subfamily. Requires Zn(2+) as cofactor.

The enzyme catalyses adenine + H2O + H(+) = hypoxanthine + NH4(+). Functionally, catalyzes the hydrolytic deamination of adenine to hypoxanthine. Plays an important role in the purine salvage pathway and in nitrogen catabolism. This is Adenine deaminase from Pseudomonas syringae pv. syringae (strain B728a).